We begin with the raw amino-acid sequence, 275 residues long: 2,3,4,5-tetrahydropyridine-2,6-dicarboxylate N-succinyltransferase (275 aa).

It belongs to the transferase hexapeptide repeat family.

The protein resides in the cytoplasm. It carries out the reaction (S)-2,3,4,5-tetrahydrodipicolinate + succinyl-CoA + H2O = (S)-2-succinylamino-6-oxoheptanedioate + CoA. It participates in amino-acid biosynthesis; L-lysine biosynthesis via DAP pathway; LL-2,6-diaminopimelate from (S)-tetrahydrodipicolinate (succinylase route): step 1/3. The polypeptide is 2,3,4,5-tetrahydropyridine-2,6-dicarboxylate N-succinyltransferase (Ralstonia pickettii (strain 12J)).